The primary structure comprises 72 residues: Translation initiation factor IF-1 (72 aa).

In terms of domain architecture, S1-like spans 2-72 (AKEDCIEMQG…SKGRIIFRSR (71 aa)).

This sequence belongs to the IF-1 family. Component of the 30S ribosomal translation pre-initiation complex which assembles on the 30S ribosome in the order IF-2 and IF-3, IF-1 and N-formylmethionyl-tRNA(fMet); mRNA recruitment can occur at any time during PIC assembly.

It localises to the cytoplasm. Functionally, one of the essential components for the initiation of protein synthesis. Stabilizes the binding of IF-2 and IF-3 on the 30S subunit to which N-formylmethionyl-tRNA(fMet) subsequently binds. Helps modulate mRNA selection, yielding the 30S pre-initiation complex (PIC). Upon addition of the 50S ribosomal subunit IF-1, IF-2 and IF-3 are released leaving the mature 70S translation initiation complex. The polypeptide is Translation initiation factor IF-1 (Haemophilus influenzae (strain ATCC 51907 / DSM 11121 / KW20 / Rd)).